The following is a 200-amino-acid chain: Recombination protein RecR (200 aa).

The C4-type zinc finger occupies 57-72 (CRQCRTLTEDELCPQC). Positions 80 to 175 (TLLCVVEGPM…ITSRIAHGVP (96 aa)) constitute a Toprim domain.

It belongs to the RecR family.

Functionally, may play a role in DNA repair. It seems to be involved in an RecBC-independent recombinational process of DNA repair. It may act with RecF and RecO. The protein is Recombination protein RecR of Pseudomonas fluorescens (strain ATCC BAA-477 / NRRL B-23932 / Pf-5).